Here is a 91-residue protein sequence, read N- to C-terminus: Large ribosomal subunit protein uL23 (91 aa).

It belongs to the universal ribosomal protein uL23 family. In terms of assembly, part of the 50S ribosomal subunit. Contacts protein L29, and trigger factor when it is bound to the ribosome.

In terms of biological role, one of the early assembly proteins it binds 23S rRNA. One of the proteins that surrounds the polypeptide exit tunnel on the outside of the ribosome. Forms the main docking site for trigger factor binding to the ribosome. This Staphylococcus haemolyticus (strain JCSC1435) protein is Large ribosomal subunit protein uL23.